The chain runs to 233 residues: 3-dehydroquinate dehydratase (233 aa).

3-dehydroquinate is bound by residues 34–36 and Arg64; that span reads ELR. The active-site Proton donor/acceptor is His118. Residue Lys145 is the Schiff-base intermediate with substrate of the active site. 3-dehydroquinate-binding residues include Arg185, Ser205, and Gln209.

The protein belongs to the type-I 3-dehydroquinase family. As to quaternary structure, homodimer.

It catalyses the reaction 3-dehydroquinate = 3-dehydroshikimate + H2O. It participates in metabolic intermediate biosynthesis; chorismate biosynthesis; chorismate from D-erythrose 4-phosphate and phosphoenolpyruvate: step 3/7. Functionally, involved in the third step of the chorismate pathway, which leads to the biosynthesis of aromatic amino acids. Catalyzes the cis-dehydration of 3-dehydroquinate (DHQ) and introduces the first double bond of the aromatic ring to yield 3-dehydroshikimate. The polypeptide is 3-dehydroquinate dehydratase (Coxiella burnetii (strain CbuG_Q212) (Coxiella burnetii (strain Q212))).